The primary structure comprises 495 residues: GTPase Der (495 aa).

EngA-type G domains follow at residues P3–E166 and I208–T381. GTP is bound by residues G9–S16, D56–I60, N118–D121, G214–S221, D261–V265, and N326–D329. Residues K382–E466 enclose the KH-like domain.

Belongs to the TRAFAC class TrmE-Era-EngA-EngB-Septin-like GTPase superfamily. EngA (Der) GTPase family. As to quaternary structure, associates with the 50S ribosomal subunit.

In terms of biological role, GTPase that plays an essential role in the late steps of ribosome biogenesis. This chain is GTPase Der, found in Yersinia pseudotuberculosis serotype O:3 (strain YPIII).